Reading from the N-terminus, the 146-residue chain is NADH-quinone oxidoreductase subunit A (146 aa).

3 helical membrane-spanning segments follow: residues F8 to T28, F63 to W83, and F93 to W113.

This sequence belongs to the complex I subunit 3 family. In terms of assembly, NDH-1 is composed of 14 different subunits. Subunits NuoA, H, J, K, L, M, N constitute the membrane sector of the complex.

The protein localises to the cell inner membrane. The catalysed reaction is a quinone + NADH + 5 H(+)(in) = a quinol + NAD(+) + 4 H(+)(out). Its function is as follows. NDH-1 shuttles electrons from NADH, via FMN and iron-sulfur (Fe-S) centers, to quinones in the respiratory chain. The immediate electron acceptor for the enzyme in this species is believed to be a menaquinone. Couples the redox reaction to proton translocation (for every two electrons transferred, four hydrogen ions are translocated across the cytoplasmic membrane), and thus conserves the redox energy in a proton gradient. In Chlorobium chlorochromatii (strain CaD3), this protein is NADH-quinone oxidoreductase subunit A.